Consider the following 273-residue polypeptide: ATP synthase subunit delta (273 aa).

Positions 55 to 78 (TDPAQSARPRPSSPSVSSAPRSAA) are disordered. The span at 57-78 (PAQSARPRPSSPSVSSAPRSAA) shows a compositional bias: low complexity.

The protein belongs to the ATPase delta chain family. As to quaternary structure, F-type ATPases have 2 components, F(1) - the catalytic core - and F(0) - the membrane proton channel. F(1) has five subunits: alpha(3), beta(3), gamma(1), delta(1), epsilon(1). F(0) has three main subunits: a(1), b(2) and c(10-14). The alpha and beta chains form an alternating ring which encloses part of the gamma chain. F(1) is attached to F(0) by a central stalk formed by the gamma and epsilon chains, while a peripheral stalk is formed by the delta and b chains.

The protein localises to the cell membrane. Functionally, f(1)F(0) ATP synthase produces ATP from ADP in the presence of a proton or sodium gradient. F-type ATPases consist of two structural domains, F(1) containing the extramembraneous catalytic core and F(0) containing the membrane proton channel, linked together by a central stalk and a peripheral stalk. During catalysis, ATP synthesis in the catalytic domain of F(1) is coupled via a rotary mechanism of the central stalk subunits to proton translocation. Its function is as follows. This protein is part of the stalk that links CF(0) to CF(1). It either transmits conformational changes from CF(0) to CF(1) or is implicated in proton conduction. In Streptomyces lividans, this protein is ATP synthase subunit delta.